The primary structure comprises 119 residues: Large ribosomal subunit protein uL18 (119 aa).

Belongs to the universal ribosomal protein uL18 family. As to quaternary structure, part of the 50S ribosomal subunit; part of the 5S rRNA/L5/L18/L25 subcomplex. Contacts the 5S and 23S rRNAs.

In terms of biological role, this is one of the proteins that bind and probably mediate the attachment of the 5S RNA into the large ribosomal subunit, where it forms part of the central protuberance. In Borrelia recurrentis (strain A1), this protein is Large ribosomal subunit protein uL18.